We begin with the raw amino-acid sequence, 808 residues long: Probable E3 ubiquitin-protein ligase hulA (808 aa).

The C2 domain occupies 1 to 112; that stretch reads MGSNLPAQPN…QMGGDEMLTR (112 aa). Disordered stretches follow at residues 134-231 and 275-346; these read NLST…GWER and RRAH…YFVD. Composition is skewed to polar residues over residues 142 to 159 and 171 to 198; these read QANG…SSGL and GPSQ…PSST. The segment covering 199-210 has biased composition (low complexity); the sequence is VAPVNGAAAPGA. Polar residues predominate over residues 211 to 220; the sequence is SRTNLSSFED. The WW 1 domain maps to 223 to 256; the sequence is GRLPAGWERREDNLGRTYYVDHNTRTTTWTRPSS. Positions 275–288 are enriched in basic and acidic residues; sequence RRAHQSRMLPEDRT. Residues 289-303 are compositionally biased toward polar residues; that stretch reads GASSPNLQENQQAQT. The segment covering 317 to 326 has biased composition (low complexity); the sequence is ATGATTAGTG. WW domains follow at residues 326 to 359 and 386 to 419; these read GELP…DPRR and GPLP…DPRL. In terms of domain architecture, HECT spans 475 to 808; that stretch reads SASDLKKRLM…VEETLGFGQE (334 aa). The active-site Glycyl thioester intermediate is the cysteine 776.

It belongs to the RSP5/NEDD4 family. As to quaternary structure, interacts with creD.

It is found in the cytoplasm. The enzyme catalyses S-ubiquitinyl-[E2 ubiquitin-conjugating enzyme]-L-cysteine + [acceptor protein]-L-lysine = [E2 ubiquitin-conjugating enzyme]-L-cysteine + N(6)-ubiquitinyl-[acceptor protein]-L-lysine.. Its pathway is protein modification; protein ubiquitination. In terms of biological role, E3 ubiquitin-protein ligase which accepts ubiquitin from an E2 ubiquitin-conjugating enzyme in the form of a thioester and then directly transfers the ubiquitin to targeted substrates. Probably involved in the regulatory network controlling carbon source utilization. In Aspergillus terreus (strain NIH 2624 / FGSC A1156), this protein is Probable E3 ubiquitin-protein ligase hulA (hulA).